A 328-amino-acid chain; its full sequence is Lipoyl synthase (328 aa).

[4Fe-4S] cluster is bound by residues C56, C61, C67, C82, C86, C89, and S298. One can recognise a Radical SAM core domain in the interval 68 to 287 (WEDREATFLI…KEEAEEIGFS (220 aa)).

The protein belongs to the radical SAM superfamily. Lipoyl synthase family. The cofactor is [4Fe-4S] cluster.

The protein localises to the cytoplasm. It catalyses the reaction [[Fe-S] cluster scaffold protein carrying a second [4Fe-4S](2+) cluster] + N(6)-octanoyl-L-lysyl-[protein] + 2 oxidized [2Fe-2S]-[ferredoxin] + 2 S-adenosyl-L-methionine + 4 H(+) = [[Fe-S] cluster scaffold protein] + N(6)-[(R)-dihydrolipoyl]-L-lysyl-[protein] + 4 Fe(3+) + 2 hydrogen sulfide + 2 5'-deoxyadenosine + 2 L-methionine + 2 reduced [2Fe-2S]-[ferredoxin]. Its pathway is protein modification; protein lipoylation via endogenous pathway; protein N(6)-(lipoyl)lysine from octanoyl-[acyl-carrier-protein]: step 2/2. Catalyzes the radical-mediated insertion of two sulfur atoms into the C-6 and C-8 positions of the octanoyl moiety bound to the lipoyl domains of lipoate-dependent enzymes, thereby converting the octanoylated domains into lipoylated derivatives. The protein is Lipoyl synthase of Streptomyces avermitilis (strain ATCC 31267 / DSM 46492 / JCM 5070 / NBRC 14893 / NCIMB 12804 / NRRL 8165 / MA-4680).